The chain runs to 248 residues: Glutamine-binding periplasmic protein (248 aa).

The signal sequence occupies residues 1–22 (MKSVLKVSLAALTLAFAVSSHA).

This sequence belongs to the bacterial solute-binding protein 3 family.

The protein localises to the periplasm. Involved in a glutamine-transport system GlnHPQ. The chain is Glutamine-binding periplasmic protein (glnH) from Escherichia coli O157:H7.